Consider the following 230-residue polypeptide: Transmembrane 4 L6 family member 20 (230 aa).

The Lumenal portion of the chain corresponds to 1-11 (MTCCEGWTSCN). The chain crosses the membrane as a helical span at residues 12-32 (GFSLLVLLLLGVTLNAIPLIL). The Cytoplasmic segment spans residues 33–44 (NFVDEDQFFENP). A helical transmembrane segment spans residues 45–65 (ISCFEWWFPGIIGAGVMAIPA). Over 66–83 (TTMSLAARKRACCNNKTG) the chain is Lumenal. A helical membrane pass occupies residues 84-104 (MFLSSLLNAITVIGAAYCLLV). Topologically, residues 105–185 (SIQALAEGPL…HFNSIENQHR (81 aa)) are cytoplasmic. Residues 186–206 (IIHFSVFLGLLLVGILEILFG) traverse the membrane as a helical segment. Over 207-230 (LSQIIIGFFGCLCGGVSNGRSQIV) the chain is Lumenal.

This sequence belongs to the L6 tetraspanin family. In terms of processing, glycosylated at Asn-132 in presence of ceramide which inverts the orientation of TM4SF20 in membranes exposing these residues to the endoplasmic reticulum lumen. Post-translationally, cleaved by signal peptidase at Ser-14 but the peptide does not act as a signal peptide. Cleavage is inhibited by ceramide which inverts the orientation of TM4SF20 in membranes exposing the N-terminus to the cytosol and not to the endoplasmic reticulum lumen.

The protein resides in the membrane. It localises to the endoplasmic reticulum membrane. Its function is as follows. Polytopic transmembrane protein. Inhibits regulated intramembrane proteolysis (RIP) of CREB3L1, inhibiting its activation and the induction of collagen synthesis. In response to ceramide, which alters TM4SF20 membrane topology, stimulates RIP activation of CREB3L1. Ceramide reverses the direction through which transmembrane helices are translocated into the endoplasmic reticulum membrane during translation of TM4SF20, this mechanism is called 'regulated alternative translocation' (RAT) and regulates the function of the transmembrane protein. The sequence is that of Transmembrane 4 L6 family member 20 (TM4SF20) from Bos taurus (Bovine).